Here is a 367-residue protein sequence, read N- to C-terminus: MDIIEELRAYREKDIPYSRVLSSMCTVPHPVAVEAHRMFIETNLGDPGIFRGTVELEAKLMRLIGDILHCETPAGYICSGGTEANIQGIRAARNVQKKENPNIVIPKTAHFSFEKIGDILGVKIKRAGVDEEYKVDVGQVEDLMDENTVAIVGIAGTTELGQIDPIVELSKLAEERQVELHVDAAFGGLVIPFMDNPYPFDFQNRGVSSITIDPHKMGMATIPAGGIIFRNESYLRALEVETPYLTSKTQFTLTGTRPGTGVASAYAVLKSLGFEGMREVVKNCLKNTRILVEEMRDLGFEPVIEPVMNVVSFRTDEAERIKEELYRMRWVISTIREPKAIRFVVMPHVTEEVIKNFISDFRKVLRR.

N6-(pyridoxal phosphate)lysine is present on lysine 216.

The protein belongs to the group II decarboxylase family. MfnA subfamily. Requires pyridoxal 5'-phosphate as cofactor.

It carries out the reaction L-aspartate + H(+) = beta-alanine + CO2. It functions in the pathway cofactor biosynthesis; coenzyme A biosynthesis. Its function is as follows. Catalyzes the decarboxylation of L-aspartate to produce beta-alanine. The sequence is that of Probable L-aspartate decarboxylase from Archaeoglobus fulgidus (strain ATCC 49558 / DSM 4304 / JCM 9628 / NBRC 100126 / VC-16).